The following is a 144-amino-acid chain: Putative pre-16S rRNA nuclease (144 aa).

It belongs to the YqgF nuclease family.

The protein resides in the cytoplasm. Its function is as follows. Could be a nuclease involved in processing of the 5'-end of pre-16S rRNA. In Wigglesworthia glossinidia brevipalpis, this protein is Putative pre-16S rRNA nuclease.